Here is a 188-residue protein sequence, read N- to C-terminus: UPF0398 protein SE_1135 (188 aa).

Belongs to the UPF0398 family.

In Staphylococcus epidermidis (strain ATCC 12228 / FDA PCI 1200), this protein is UPF0398 protein SE_1135.